A 248-amino-acid polypeptide reads, in one-letter code: Ribonuclease PH (248 aa).

Phosphate-binding positions include arginine 86 and 124–126; that span reads GTR.

Belongs to the RNase PH family. As to quaternary structure, homohexameric ring arranged as a trimer of dimers.

It carries out the reaction tRNA(n+1) + phosphate = tRNA(n) + a ribonucleoside 5'-diphosphate. Phosphorolytic 3'-5' exoribonuclease that plays an important role in tRNA 3'-end maturation. Removes nucleotide residues following the 3'-CCA terminus of tRNAs; can also add nucleotides to the ends of RNA molecules by using nucleoside diphosphates as substrates, but this may not be physiologically important. Probably plays a role in initiation of 16S rRNA degradation (leading to ribosome degradation) during starvation. The sequence is that of Ribonuclease PH from Listeria innocua serovar 6a (strain ATCC BAA-680 / CLIP 11262).